A 315-amino-acid chain; its full sequence is Serine/threonine-protein phosphatase PP2A catalytic subunit 3 (315 aa).

Residues D62, H64, D90, and N122 each coordinate Mn(2+). H123 acts as the Proton donor in catalysis. H172 and H247 together coordinate Mn(2+). The disordered stretch occupies residues 294 to 315 (QFEPAPRENEPHTTRRVPDYFL). Residues 298-315 (APRENEPHTTRRVPDYFL) are compositionally biased toward basic and acidic residues. A Leucine methyl ester modification is found at L315.

This sequence belongs to the PPP phosphatase family. PP-2A subfamily. Mn(2+) serves as cofactor. Post-translationally, reversibly methyl esterified on Leu-315 by leucine carboxyl methyltransferase 1 (PPM1) and protein phosphatase methylesterase 1 (PPE1). Carboxyl methylation influences the affinity of the catalytic subunit for the different regulatory subunits, thereby modulating the PP2A holoenzyme's substrate specificity, enzyme activity and cellular localization.

It catalyses the reaction O-phospho-L-seryl-[protein] + H2O = L-seryl-[protein] + phosphate. It carries out the reaction O-phospho-L-threonyl-[protein] + H2O = L-threonyl-[protein] + phosphate. This chain is Serine/threonine-protein phosphatase PP2A catalytic subunit 3 (Ppn3), found in Paramecium tetraurelia.